We begin with the raw amino-acid sequence, 1939 residues long: Myosin-2 (1939 aa).

The 50-residue stretch at 33-82 folds into the Myosin N-terminal SH3-like domain; the sequence is DAKTSVFVAEPKESFVKGTIQSREGGKVTVKTEAGATLTVKEDQVFPMNP. Phosphothreonine is present on residues Thr-64 and Thr-69. Positions 86-782 constitute a Myosin motor domain; sequence DKIEDMAMMT…LLGLLEEMRD (697 aa). Lys-130 carries the N6,N6,N6-trimethyllysine modification. An ATP-binding site is contributed by 179 to 186; that stretch reads GESGAGKT. Tyr-389 bears the Phosphotyrosine mark. The residue at position 392 (Ser-392) is a Phosphoserine. Thr-419 carries the phosphothreonine modification. Ser-625 is subject to Phosphoserine. Positions 659–681 are actin-binding; sequence LNKLMTNLRSTHPHFVRCIIPNE. His-757 bears the Pros-methylhistidine mark. Positions 761-775 are actin-binding; that stretch reads KFGHTKVFFKAGLLG. Positions 785-814 constitute an IQ domain; the sequence is LAQLITRTQARCRGFLARVEYQKMVERRES. Positions 843–1939 form a coiled coil; that stretch reads LLKSAESEKE…EVHTKVISEE (1097 aa). 2 positions are modified to phosphoserine: Ser-1092 and Ser-1096. Disordered stretches follow at residues 1126 to 1147 and 1153 to 1172; these read IEAE…SREL and RLEE…KKRE. The span at 1128-1147 shows a compositional bias: basic and acidic residues; sequence AERASRAKAEKQRSDLSREL. Phosphoserine occurs at positions 1162 and 1237. Thr-1241 carries the phosphothreonine modification. Ser-1243 bears the Phosphoserine mark. The residue at position 1255 (Thr-1255) is a Phosphothreonine. Ser-1261 bears the Phosphoserine mark. A Phosphothreonine modification is found at Thr-1286. 4 positions are modified to phosphoserine: Ser-1288, Ser-1292, Ser-1303, and Ser-1306. A Phosphotyrosine modification is found at Tyr-1464. Residue Thr-1467 is modified to Phosphothreonine. Residue Ser-1474 is modified to Phosphoserine. At Tyr-1492 the chain carries Phosphotyrosine. A Phosphoserine modification is found at Ser-1495. Thr-1501 carries the post-translational modification Phosphothreonine. Phosphoserine is present on Ser-1514. Phosphothreonine is present on Thr-1517. Residues Ser-1542, Ser-1554, Ser-1574, Ser-1600, Ser-1603, Ser-1714, and Ser-1726 each carry the phosphoserine modification. A phosphothreonine mark is found at Thr-1730 and Thr-1736. Ser-1739 carries the phosphoserine modification. Residues 1885 to 1915 are disordered; sequence QAEEAEEQSNTNLSKFRKLQHELEEAEERAD.

The protein belongs to the TRAFAC class myosin-kinesin ATPase superfamily. Myosin family. As to quaternary structure, muscle myosin is a hexameric protein that consists of 2 heavy chain subunits (MHC), 2 alkali light chain subunits (MLC) and 2 regulatory light chain subunits (MLC-2). Interacts with GCSAM.

It localises to the cytoplasm. The protein localises to the myofibril. In terms of biological role, myosins are actin-based motor molecules with ATPase activity essential for muscle contraction. The protein is Myosin-2 (MYH2) of Sus scrofa (Pig).